A 190-amino-acid polypeptide reads, in one-letter code: (S)-2-hydroxypropylphosphonic acid epoxidase (190 aa).

The region spanning 10–60 (KAHLEALLATRKMTLEHLQDVRHDATQVYFDGLEHLQNVAQYLAIPLSEFF) is the HTH cro/C1-type domain. Residues 20-40 (RKMTLEHLQDVRHDATQVYFD) constitute a DNA-binding region (H-T-H motif). Substrate is bound by residues Arg-87, Tyr-95, 125-128 (NGGH), and Glu-132. Residues His-128, Glu-132, and His-171 each coordinate Fe cation. The 49-residue stretch at 128–176 (HGSREIVYVTRGAVRVRWVGDNDELKEDVLNEGDSIFILPNVPHSFTNH) folds into the Cupin type-2 domain.

This sequence belongs to the non-heme iron-dependent dioxygenase family. In terms of assembly, homotrimer. Requires Fe(2+) as cofactor.

The enzyme catalyses (S)-2-hydroxypropylphosphonate + H2O2 = (1R,2S)-epoxypropylphosphonate + 2 H2O. It participates in antibiotic biosynthesis; fosfomycin biosynthesis. In terms of biological role, non-heme-dependent dioxygenase that catalyzes the oxidative epoxidation of (S)-2-hydroxypropylphosphonate into (1R,2S)-epoxypropylphosphonate, the final step in the biosynthesis of fosfomycin antibiotic. The polypeptide is (S)-2-hydroxypropylphosphonic acid epoxidase (hppE) (Pseudomonas syringae).